We begin with the raw amino-acid sequence, 415 residues long: Multidrug resistance protein MdtA (415 aa).

Residues 1-21 (MKGSYKSRWVIVIVVVIAAIA) form the signal peptide. Disordered stretches follow at residues 32–59 (SRSA…SGPL) and 392–415 (EAQS…GARS). Positions 399-415 (SEEKATSREYAKKGARS) are enriched in basic and acidic residues.

The protein belongs to the membrane fusion protein (MFP) (TC 8.A.1) family. Part of a tripartite efflux system composed of MdtA, MdtB and MdtC.

It is found in the cell inner membrane. Its function is as follows. The MdtABC tripartite complex confers resistance against novobiocin and deoxycholate. In Escherichia coli O17:K52:H18 (strain UMN026 / ExPEC), this protein is Multidrug resistance protein MdtA.